Reading from the N-terminus, the 423-residue chain is Histidine--tRNA ligase (423 aa).

The protein belongs to the class-II aminoacyl-tRNA synthetase family. As to quaternary structure, homodimer.

Its subcellular location is the cytoplasm. The enzyme catalyses tRNA(His) + L-histidine + ATP = L-histidyl-tRNA(His) + AMP + diphosphate + H(+). The chain is Histidine--tRNA ligase from Haemophilus ducreyi (strain 35000HP / ATCC 700724).